A 484-amino-acid chain; its full sequence is Polyamine oxidase 3 (484 aa).

FAD is bound by residues Glu-47, Arg-55, Val-236, and Glu-423. The Microbody targeting signal motif lies at 482–484 (SRL).

Belongs to the flavin monoamine oxidase family. It depends on FAD as a cofactor. Widely expressed.

It is found in the peroxisome. The enzyme catalyses spermine + O2 + H2O = 3-aminopropanal + spermidine + H2O2. The catalysed reaction is N(1)-acetylspermine + O2 + H2O = 3-acetamidopropanal + spermidine + H2O2. It catalyses the reaction norspermine + O2 + H2O = norspermidine + 3-aminopropanal + H2O2. It carries out the reaction spermidine + O2 + H2O = 3-aminopropanal + putrescine + H2O2. The enzyme catalyses thermospermine + O2 + H2O = 3-aminopropanal + spermidine + H2O2. Its pathway is amine and polyamine degradation; spermine degradation. It participates in amine and polyamine degradation; spermidine degradation. Flavoenzyme involved in polyamine back-conversion. Catalyzes the oxidation of the secondary amino group of polyamines, such as spermine, spermidine and their acetyl derivatives. Substrate preference is spermidine &gt; norspermine &gt; thermospermine &gt; N(1)-acetylspermine &gt; spermine. No activity detected when putrescine is used as substrate. Plays an important role in the regulation of polyamine intracellular concentration. In Oryza sativa subsp. japonica (Rice), this protein is Polyamine oxidase 3.